The sequence spans 152 residues: Large ribosomal subunit protein uL15 (152 aa).

The protein belongs to the universal ribosomal protein uL15 family. In terms of assembly, part of the 50S ribosomal subunit.

Binds to the 23S rRNA. The protein is Large ribosomal subunit protein uL15 of Staphylothermus marinus (strain ATCC 43588 / DSM 3639 / JCM 9404 / F1).